Here is a 220-residue protein sequence, read N- to C-terminus: NADH-quinone oxidoreductase subunit I (220 aa).

2 consecutive 4Fe-4S ferredoxin-type domains span residues 71 to 102 (LQRL…IITH) and 112 to 141 (DSYT…MGNR). 8 residues coordinate [4Fe-4S] cluster: Cys82, Cys85, Cys88, Cys92, Cys121, Cys124, Cys127, and Cys131. Residues 187–220 (MQATPLDYVQEPSKEESKEESPTSPESHKGDENV) form a disordered region. Residues 198–220 (PSKEESKEESPTSPESHKGDENV) show a composition bias toward basic and acidic residues.

The protein belongs to the complex I 23 kDa subunit family. In terms of assembly, NDH-1 is composed of 14 different subunits. Subunits NuoA, H, J, K, L, M, N constitute the membrane sector of the complex. Requires [4Fe-4S] cluster as cofactor.

Its subcellular location is the cell inner membrane. The catalysed reaction is a quinone + NADH + 5 H(+)(in) = a quinol + NAD(+) + 4 H(+)(out). NDH-1 shuttles electrons from NADH, via FMN and iron-sulfur (Fe-S) centers, to quinones in the respiratory chain. The immediate electron acceptor for the enzyme in this species is believed to be ubiquinone. Couples the redox reaction to proton translocation (for every two electrons transferred, four hydrogen ions are translocated across the cytoplasmic membrane), and thus conserves the redox energy in a proton gradient. This is NADH-quinone oxidoreductase subunit I from Helicobacter pylori (strain J99 / ATCC 700824) (Campylobacter pylori J99).